Here is a 291-residue protein sequence, read N- to C-terminus: m-AAA protease-interacting protein 1, mitochondrial (291 aa).

The N-terminal 96 residues, 1–96, are a transit peptide targeting the mitochondrion; it reads MALAVRLLPR…TFPSCPRRTY (96 aa).

Interacts with AFG3L2. Interacts with SPG7. Interacts with SMDT1/EMRE (via the N-terminal transit peptide); interaction is direct and takes place before maturation of SMDT1/EMRE.

The protein resides in the mitochondrion matrix. Promotes sorting of SMDT1/EMRE in mitochondria by ensuring its maturation. Interacts with the transit peptide region of SMDT1/EMRE precursor protein in the mitochondrial matrix, leading to protect it against protein degradation by YME1L1, thereby ensuring SMDT1/EMRE maturation by the mitochondrial processing peptidase (PMPCA and PMPCB). The protein is m-AAA protease-interacting protein 1, mitochondrial of Bos taurus (Bovine).